The chain runs to 359 residues: Prostaglandin D2 receptor (359 aa).

The Extracellular portion of the chain corresponds to 1–21 (MKSPFYRCQNTTSVEKGNSAV). N10 carries an N-linked (GlcNAc...) asparagine glycan. Residues 22 to 42 (MGGVLFSTGLLGNLLALGLLA) form a helical membrane-spanning segment. Residues 43 to 59 (RSGLGWCSRRPLRPLPS) lie on the Cytoplasmic side of the membrane. A helical transmembrane segment spans residues 60 to 80 (VFYMLVCGLTVTDLLGKCLLS). The Extracellular portion of the chain corresponds to 81 to 107 (PVVLAAYAQNRSLRVLAPALDNSLCQA). Residue N90 is glycosylated (N-linked (GlcNAc...) asparagine). A disulfide bridge links C105 with C183. Residues 108–128 (FAFFMSFFGLSSTLQLLAMAL) traverse the membrane as a helical segment. Residues 129 to 150 (ECWLSLGHPFFYRRHITLRLGA) are Cytoplasmic-facing. The chain crosses the membrane as a helical span at residues 151 to 171 (LVAPVVSAFSLAFCALPFMGF). Residues 172–195 (GKFVQYCPGTWCFIQMVHEEGSLS) lie on the Extracellular side of the membrane. Residues 196–216 (VLGYSVLYSSLMALLVLATVL) traverse the membrane as a helical segment. Topologically, residues 217–262 (CNLGAMRNLYAMHRRLQRHPRSCTRDCAEPRADGREASPQPLEELD) are cytoplasmic. The chain crosses the membrane as a helical span at residues 263-283 (HLLLLALMTVLFTMCSLPVIY). Residues 284 to 310 (RAYYGAFKDVKEKNRTSEEAEDLRALR) are Extracellular-facing. N-linked (GlcNAc...) asparagine glycosylation occurs at N297. Residues 311 to 331 (FLSVISIVDPWIFIIFRSPVF) traverse the membrane as a helical segment. The Cytoplasmic segment spans residues 332-359 (RIFFHKIFIRPLRYRSRCSNSTNMESSL).

Belongs to the G-protein coupled receptor 1 family. In terms of tissue distribution, expressed in retinal choroid, ciliary epithelium, longitudinal and circular ciliary muscles, iris, small intestine and platelet membranes.

It localises to the cell membrane. Functionally, receptor for prostaglandin D2 (PGD2). The activity of this receptor is mainly mediated by G(s) proteins that stimulate adenylate cyclase, resulting in an elevation of intracellular cAMP. A mobilization of calcium is also observed, but without formation of inositol 1,4,5-trisphosphate. Involved in PLA2G3-dependent maturation of mast cells. PLA2G3 is secreted by immature mast cells and acts on nearby fibroblasts upstream to PTDGS to synthesize PGD2, which in turn promotes mast cell maturation and degranulation via PTGDR. In Homo sapiens (Human), this protein is Prostaglandin D2 receptor (PTGDR).